Consider the following 288-residue polypeptide: MAAKIIDGKTIAQQVRSEVAQKVQARVAAGLRAPGLAVVLVGSNPASQIYVASKRKACDEVGFVSRSYDLPETTSEAELLELIDTLNADSTIDGILVQLPLPAGIDNVKVLERIAPDKDVDGFHPYNVGRLCQRAPRLRPCTPRGIVTLLERYNIDTYGLNAVVIGASNIVGRPMSMELLLAGCTTTVTHRFTKDLRHHVEHADLLIVAVGKPGFIPGEWIKEGAIVIDVGINRLENGKVVGDVVFEEAAARASYITPVPGGVGPMTVATLIENTLQACTEYHDPQGK.

NADP(+) is bound by residues 166 to 168 and isoleucine 232; that span reads GAS.

Belongs to the tetrahydrofolate dehydrogenase/cyclohydrolase family. As to quaternary structure, homodimer.

It carries out the reaction (6R)-5,10-methylene-5,6,7,8-tetrahydrofolate + NADP(+) = (6R)-5,10-methenyltetrahydrofolate + NADPH. The catalysed reaction is (6R)-5,10-methenyltetrahydrofolate + H2O = (6R)-10-formyltetrahydrofolate + H(+). Its pathway is one-carbon metabolism; tetrahydrofolate interconversion. Catalyzes the oxidation of 5,10-methylenetetrahydrofolate to 5,10-methenyltetrahydrofolate and then the hydrolysis of 5,10-methenyltetrahydrofolate to 10-formyltetrahydrofolate. This is Bifunctional protein FolD from Salmonella arizonae (strain ATCC BAA-731 / CDC346-86 / RSK2980).